Here is an 836-residue protein sequence, read N- to C-terminus: Protein AKNAD1 (836 aa).

Composition is skewed to polar residues over residues 159–172, 181–192, and 227–248; these read SWPKEQTPELTDQL, SNKPGSATTTEE, and SYQGQSPQKQQTEKANSGNTFK. 2 disordered regions span residues 159 to 248 and 303 to 325; these read SWPK…NTFK and LETTPESNCVEKQHQEQKGKITE. The span at 311-323 shows a compositional bias: basic and acidic residues; that stretch reads CVEKQHQEQKGKI. The stretch at 372–484 forms a coiled coil; the sequence is QKISQGKQMC…DVKEKMDESK (113 aa). Disordered stretches follow at residues 510-545 and 575-596; these read SNEIPKEHPGHPSGPRGSGGSEVTGTPQGGPQEAPN and MRLSSNSGEDPNGTPRRQDCAE.

It belongs to the AKNA family.

The polypeptide is Protein AKNAD1 (AKNAD1) (Homo sapiens (Human)).